Consider the following 380-residue polypeptide: 1-deoxy-D-xylulose 5-phosphate reductoisomerase (380 aa).

NADPH-binding residues include Thr-10, Gly-11, Ser-12, Ile-13, Gly-36, Arg-37, Asn-38, and Asn-120. Lys-121 contributes to the 1-deoxy-D-xylulose 5-phosphate binding site. Glu-122 provides a ligand contact to NADPH. Asp-146 is a Mn(2+) binding site. Positions 147, 148, 172, and 195 each coordinate 1-deoxy-D-xylulose 5-phosphate. Glu-148 provides a ligand contact to Mn(2+). Gly-201 contacts NADPH. 1-deoxy-D-xylulose 5-phosphate-binding residues include Ser-208, Asn-213, Lys-214, and Glu-217. Glu-217 is a binding site for Mn(2+).

Belongs to the DXR family. Mg(2+) serves as cofactor. It depends on Mn(2+) as a cofactor.

It catalyses the reaction 2-C-methyl-D-erythritol 4-phosphate + NADP(+) = 1-deoxy-D-xylulose 5-phosphate + NADPH + H(+). Its pathway is isoprenoid biosynthesis; isopentenyl diphosphate biosynthesis via DXP pathway; isopentenyl diphosphate from 1-deoxy-D-xylulose 5-phosphate: step 1/6. Functionally, catalyzes the NADPH-dependent rearrangement and reduction of 1-deoxy-D-xylulose-5-phosphate (DXP) to 2-C-methyl-D-erythritol 4-phosphate (MEP). In Listeria innocua serovar 6a (strain ATCC BAA-680 / CLIP 11262), this protein is 1-deoxy-D-xylulose 5-phosphate reductoisomerase.